A 259-amino-acid polypeptide reads, in one-letter code: uncharacterized protein (259 aa).

The 240-residue stretch at 4-243 (INLKNINLTR…KILTDFYQEK (240 aa)) folds into the ABC transporter domain. 36–43 (GLNGSGKS) is a binding site for ATP.

The protein belongs to the ABC transporter superfamily.

This is an uncharacterized protein from Lactococcus lactis subsp. lactis (strain IL1403) (Streptococcus lactis).